Reading from the N-terminus, the 201-residue chain is IMP cyclohydrolase (201 aa).

It belongs to the archaeal IMP cyclohydrolase family.

The enzyme catalyses IMP + H2O = 5-formamido-1-(5-phospho-D-ribosyl)imidazole-4-carboxamide. It participates in purine metabolism; IMP biosynthesis via de novo pathway; IMP from 5-formamido-1-(5-phospho-D-ribosyl)imidazole-4-carboxamide: step 1/1. Its function is as follows. Catalyzes the cyclization of 5-formylamidoimidazole-4-carboxamide ribonucleotide to IMP. In Methanocella arvoryzae (strain DSM 22066 / NBRC 105507 / MRE50), this protein is IMP cyclohydrolase.